Consider the following 1095-residue polypeptide: MSRSAIQVAKAATYLPDLVEVQRSSFKWFLDKGLIEELDNFSPITDYTGKLELHFIGAEYKLKRPRHDVEEAKRRDATFASQMYVTCRLVNKETGEIKEQEVFIGELPLMTERGTFIINGAERVIVNQIVRSPGVYFKDEQDKNGRRTYNASVIPNRGAWLKFETDKNDLLHVRVDKTRKINAHVLMRAMGLSDNDVIDKLRHPEFYKKSIDAANEEGISSEDQALLELYKKLRPGEPPSVSGGQQLLQTRFFDPKRYDLGRVGRYKINKKLRLTIPDNLRTLTNEDVLSTLDYLINLELDVGGATLDDIDHLGNRRVRSVGELLQNQVRVGLNRLERIIKERMTVGETDSLTPAQLVNPKPLVAAIKEFFGSSQLSQFMDQTNPLAELTHKRRISALGPGGLTRERAGFAVRDIHPSHYGRLCPIETPEGPNAGLINSLATHARVNEYGFIETPFWKVENGRLIKEGDPIYLSADLEDECRVAPGDVATNEEGKIMAELVPVRYRQDFETVSPEQVDYVQLSPVQVISVAASLIPFLEHDDANRALMGSNMQRQAVPLLRPERPLVGTGLETQVARDSGMVPISKVNGKVTYVDANAIVVTDDEGNDHTHYLQKYQRSNQDTCLNHRPIVFNGDPVIVGQVLADGSACEGGEIALGQNVLIAYMPWEGYNYEDAILVSERLVKDDLYTSVHIEKYEIEARQTKLGPEEITREIPNVSEENLGNLDEMGIIRIGAYVESGDILVGKVTPKGESDQPPEEKLLRAIFGEKARDVRDNSLRVPSTERGRVVDVRIYTREQGDELPPGANMVVRVYVAQRRKIQVGDKMAGRHGNKGIISRILPREDMPYLPDGTPVDICLNPLGVPSRMNVGQVFELLMGWAASNLDCRVKIVPFDEMYGPEMSNQTVQAYLKKAAKQPGKSWVYNPKDPGKLLLKDGRTGEPFDQPVAVGYAHFLKLVHLVDDKIHARSTGPYSLVTQQPLGGKAQQGGQRLGEMEVWALEAYGAAYTLQELLTVKSDDMQGRNEALNSIVKGKPIPRPGTPESFKVLMRELQSLGLDIGVYTDDGKEVDLMQDVNPRRSTPSRPTYESLGKEYEE.

Positions 1069–1095 (DLMQDVNPRRSTPSRPTYESLGKEYEE) are disordered.

This sequence belongs to the RNA polymerase beta chain family. As to quaternary structure, in cyanobacteria the RNAP catalytic core is composed of 2 alpha, 1 beta, 1 beta', 1 gamma and 1 omega subunit. When a sigma factor is associated with the core the holoenzyme is formed, which can initiate transcription.

It catalyses the reaction RNA(n) + a ribonucleoside 5'-triphosphate = RNA(n+1) + diphosphate. In terms of biological role, DNA-dependent RNA polymerase catalyzes the transcription of DNA into RNA using the four ribonucleoside triphosphates as substrates. This Prochlorococcus marinus (strain NATL2A) protein is DNA-directed RNA polymerase subunit beta.